Here is a 475-residue protein sequence, read N- to C-terminus: Ribulose bisphosphate carboxylase large chain (475 aa).

Positions 1-2 (MS) are excised as a propeptide. Proline 3 is subject to N-acetylproline. Lysine 14 carries the post-translational modification N6,N6,N6-trimethyllysine. Substrate-binding residues include asparagine 123 and threonine 173. The active-site Proton acceptor is the lysine 175. Lysine 177 serves as a coordination point for substrate. Residues lysine 201, aspartate 203, and glutamate 204 each coordinate Mg(2+). At lysine 201 the chain carries N6-carboxylysine. Histidine 294 serves as the catalytic Proton acceptor. Residues arginine 295, histidine 327, and serine 379 each contribute to the substrate site.

This sequence belongs to the RuBisCO large chain family. Type I subfamily. In terms of assembly, heterohexadecamer of 8 large chains and 8 small chains; disulfide-linked. The disulfide link is formed within the large subunit homodimers. Mg(2+) is required as a cofactor. In terms of processing, the disulfide bond which can form in the large chain dimeric partners within the hexadecamer appears to be associated with oxidative stress and protein turnover.

It localises to the plastid. The protein resides in the chloroplast. The catalysed reaction is 2 (2R)-3-phosphoglycerate + 2 H(+) = D-ribulose 1,5-bisphosphate + CO2 + H2O. The enzyme catalyses D-ribulose 1,5-bisphosphate + O2 = 2-phosphoglycolate + (2R)-3-phosphoglycerate + 2 H(+). In terms of biological role, ruBisCO catalyzes two reactions: the carboxylation of D-ribulose 1,5-bisphosphate, the primary event in carbon dioxide fixation, as well as the oxidative fragmentation of the pentose substrate in the photorespiration process. Both reactions occur simultaneously and in competition at the same active site. This Tsuga heterophylla (Western hemlock) protein is Ribulose bisphosphate carboxylase large chain.